Consider the following 221-residue polypeptide: Endonuclease V (221 aa).

Residues D43 and D109 each contribute to the Mg(2+) site.

It belongs to the endonuclease V family. It depends on Mg(2+) as a cofactor.

It localises to the cytoplasm. The catalysed reaction is Endonucleolytic cleavage at apurinic or apyrimidinic sites to products with a 5'-phosphate.. Its function is as follows. DNA repair enzyme involved in the repair of deaminated bases. Selectively cleaves double-stranded DNA at the second phosphodiester bond 3' to a deoxyinosine leaving behind the intact lesion on the nicked DNA. This chain is Endonuclease V, found in Petrotoga mobilis (strain DSM 10674 / SJ95).